Here is a 65-residue protein sequence, read N- to C-terminus: MPKIKTNRGAAKRFKATASGRYKRAHAFHNHILTKKDSKRKRKLRADALVAEADTPMIRRMMPYS.

It belongs to the bacterial ribosomal protein bL35 family.

This chain is Large ribosomal subunit protein bL35, found in Alkalilimnicola ehrlichii (strain ATCC BAA-1101 / DSM 17681 / MLHE-1).